The primary structure comprises 704 residues: PHD finger protein MALE MEIOCYTE DEATH 1 (704 aa).

Residues 606 to 656 (MVKCICRARDDDGERMISCDVCEVWQHTRCCGIDDSDTLPPLFVCSNCCEE) form a PHD-type zinc finger. Cysteine 609, cysteine 611, cysteine 624, cysteine 627, histidine 632, cysteine 635, cysteine 650, and cysteine 653 together coordinate Zn(2+).

As to quaternary structure, interacts with JMJ16 in the nucleus of male meiocytes, especially on pachytene chromosomes. Expressed in inflorescence, specifically in male meiocytes.

The protein localises to the nucleus. Functionally, probable transcription factor required for chromosome organization and progression during male meiosis (e.g. microsporogenesis). Necessary for fertility and meiotic progressive compaction of prophase I chromosomes to metaphase I bivalents. Together with JMJ16, promotes gene expression in male meiocytes in an H3K9me3-dependent manner, and contributes to meiotic chromosome condensation by triggering some condensin promoters (e.g. CAP-D3 and CAP-H). This Arabidopsis thaliana (Mouse-ear cress) protein is PHD finger protein MALE MEIOCYTE DEATH 1.